The primary structure comprises 78 residues: Alpha-neurotoxin homolog 1 (78 aa).

Positions 1–21 (MKTLLLTLVVVTIVCLDFGYT) are cleaved as a signal peptide. 4 cysteine pairs are disulfide-bonded: C24/C42, C37/C57, C59/C70, and C71/C76.

This sequence belongs to the three-finger toxin family. Short-chain subfamily. Orphan group XII sub-subfamily. Expressed by the venom gland.

It localises to the secreted. This chain is Alpha-neurotoxin homolog 1, found in Micrurus corallinus (Brazilian coral snake).